The following is a 202-amino-acid chain: Imidazoleglycerol-phosphate dehydratase (202 aa).

This sequence belongs to the imidazoleglycerol-phosphate dehydratase family.

The protein resides in the cytoplasm. It carries out the reaction D-erythro-1-(imidazol-4-yl)glycerol 3-phosphate = 3-(imidazol-4-yl)-2-oxopropyl phosphate + H2O. Its pathway is amino-acid biosynthesis; L-histidine biosynthesis; L-histidine from 5-phospho-alpha-D-ribose 1-diphosphate: step 6/9. This chain is Imidazoleglycerol-phosphate dehydratase, found in Corynebacterium glutamicum (strain ATCC 13032 / DSM 20300 / JCM 1318 / BCRC 11384 / CCUG 27702 / LMG 3730 / NBRC 12168 / NCIMB 10025 / NRRL B-2784 / 534).